A 375-amino-acid chain; its full sequence is EP300-interacting inhibitor of differentiation 3 (375 aa).

The stretch at 23-51 (AWQHLVKQEEEEAVKKEEKEEGEDEEEEG) forms a coiled coil. The tract at residues 30–68 (QEEEEAVKKEEKEEGEDEEEEGSDSSSDDPNPEPPCMHP) is disordered. The span at 42 to 60 (EEGEDEEEEGSDSSSDDPN) shows a compositional bias: acidic residues.

It belongs to the NSE4 family. Component of the SMC5-SMC6 complex which consists at least of SMC5, SMC6, NSMCE2, NSMCE1, NSMCE4A or EID3 and NSMCE3; EID3 seems to be a testis-specific subunit. NSMCE1, NSMCE4A or EID3 and NSMCE3 probably form a subcomplex that bridges the head domains of the SMC5:SMC6 heterodimer. Homodimer, and heterodimer with EID2. Interacts with the C-terminal region of CREBBP.

Its subcellular location is the nucleus. The protein resides in the cytoplasm. It is found in the chromosome. The protein localises to the telomere. In terms of biological role, tissue-specific component of the SMC5-SMC6 complex, a complex involved in repair of DNA double-strand breaks by homologous recombination. The complex may promote sister chromatid homologous recombination by recruiting the SMC1-SMC3 cohesin complex to double-strand breaks. The complex is required for telomere maintenance via recombination and mediates sumoylation of shelterin complex (telosome) components. Functionally, acts as a repressor of nuclear receptor-dependent transcription possibly by interfering with CREBBP-dependent coactivation. May function as a coinhibitor of other CREBBP/EP300-dependent transcription factors. The chain is EP300-interacting inhibitor of differentiation 3 from Mus musculus (Mouse).